We begin with the raw amino-acid sequence, 239 residues long: Ribosomal RNA small subunit methyltransferase G (239 aa).

S-adenosyl-L-methionine contacts are provided by residues Gly77, Phe82, 128–129, and Arg147; that span reads AE. Positions 216–239 are disordered; the sequence is EKKKQTPKKYPRKPGTPNKSPIEG.

This sequence belongs to the methyltransferase superfamily. RNA methyltransferase RsmG family.

The protein localises to the cytoplasm. Its function is as follows. Specifically methylates the N7 position of guanine in position 535 of 16S rRNA. The chain is Ribosomal RNA small subunit methyltransferase G from Bacillus pumilus (strain SAFR-032).